A 633-amino-acid polypeptide reads, in one-letter code: Bifunctional enzyme CysN/CysC (633 aa).

Residues 1–463 (MSHQSDLISE…REERAGRFGQ (463 aa)) form a sulfate adenylyltransferase region. A tr-type G domain is found at 22-241 (KELLRFLTCG…TVEIAADRNL (220 aa)). Positions 31–38 (GNVDDGKS) are G1. 31–38 (GNVDDGKS) is a binding site for GTP. Residues 89 to 93 (GITID) are G2. The segment at 110-113 (DTPG) is G3. GTP is bound by residues 110–114 (DTPGH) and 165–168 (NKMD). A G4 region spans residues 165–168 (NKMD). The segment at 204–206 (SAL) is G5. The interval 464–633 (QPATVLFSGL…LDLLRERQAI (170 aa)) is adenylyl-sulfate kinase. ATP is bound at residue 472-479 (GLSGAGKS).

In the C-terminal section; belongs to the APS kinase family. It in the N-terminal section; belongs to the TRAFAC class translation factor GTPase superfamily. Classic translation factor GTPase family. CysN/NodQ subfamily. As to quaternary structure, heterodimer composed of CysD, the smaller subunit, and CysNC.

It catalyses the reaction sulfate + ATP + H(+) = adenosine 5'-phosphosulfate + diphosphate. The enzyme catalyses adenosine 5'-phosphosulfate + ATP = 3'-phosphoadenylyl sulfate + ADP + H(+). The protein operates within sulfur metabolism; hydrogen sulfide biosynthesis; sulfite from sulfate: step 1/3. Its pathway is sulfur metabolism; hydrogen sulfide biosynthesis; sulfite from sulfate: step 2/3. In terms of biological role, with CysD forms the ATP sulfurylase (ATPS) that catalyzes the adenylation of sulfate producing adenosine 5'-phosphosulfate (APS) and diphosphate, the first enzymatic step in sulfur assimilation pathway. APS synthesis involves the formation of a high-energy phosphoric-sulfuric acid anhydride bond driven by GTP hydrolysis by CysN coupled to ATP hydrolysis by CysD. Functionally, APS kinase catalyzes the synthesis of activated sulfate. This chain is Bifunctional enzyme CysN/CysC (cysNC), found in Pseudomonas aeruginosa (strain ATCC 15692 / DSM 22644 / CIP 104116 / JCM 14847 / LMG 12228 / 1C / PRS 101 / PAO1).